Reading from the N-terminus, the 440-residue chain is Transposon Ty1-GR2 Gag polyprotein (440 aa).

Positions Met1–Ser16 are enriched in low complexity. 3 disordered regions span residues Met1–Gln93, Pro126–Pro173, and Gly352–Tyr440. Polar residues-rich tracts occupy residues Thr48–Ser60 and Gln127–Phe152. The span at Thr153 to Thr165 shows a compositional bias: low complexity. The segment at Asn299–His401 is RNA-binding. A compositionally biased stretch (low complexity) spans Asn402–Ser418. The residue at position 416 (Ser416) is a Phosphoserine. Residues Lys419–Asn428 show a composition bias toward polar residues. Positions Asn429–Tyr440 are enriched in basic and acidic residues.

In terms of assembly, homotrimer.

It is found in the cytoplasm. In terms of biological role, capsid protein (CA) is the structural component of the virus-like particle (VLP), forming the shell that encapsulates the retrotransposons dimeric RNA genome. The particles are assembled from trimer-clustered units and there are holes in the capsid shells that allow for the diffusion of macromolecules. CA also has nucleocapsid-like chaperone activity, promoting primer tRNA(i)-Met annealing to the multipartite primer-binding site (PBS), dimerization of Ty1 RNA and initiation of reverse transcription. In Saccharomyces cerevisiae (strain ATCC 204508 / S288c) (Baker's yeast), this protein is Transposon Ty1-GR2 Gag polyprotein (TY1A-GR2).